We begin with the raw amino-acid sequence, 145 residues long: Large ribosomal subunit protein uL15 (145 aa).

The disordered stretch occupies residues 1–43 (MRLNTIKPGAGSKSAAKRVGRGIGSGLGKTCGRGHKGQKSRAG). A compositionally biased stretch (gly residues) spans 21-31 (RGIGSGLGKTC).

It belongs to the universal ribosomal protein uL15 family. In terms of assembly, part of the 50S ribosomal subunit.

Functionally, binds to the 23S rRNA. This chain is Large ribosomal subunit protein uL15, found in Aromatoleum aromaticum (strain DSM 19018 / LMG 30748 / EbN1) (Azoarcus sp. (strain EbN1)).